Reading from the N-terminus, the 222-residue chain is Triosephosphate isomerase (222 aa).

10-12 contributes to the substrate binding site; sequence NCK. Histidine 93 serves as the catalytic Electrophile. Glutamate 141 (proton acceptor) is an active-site residue. Residues isoleucine 146, glycine 180, and 201–202 each bind substrate; that span reads AS.

It belongs to the triosephosphate isomerase family. In terms of assembly, homotetramer; dimer of dimers.

It localises to the cytoplasm. The catalysed reaction is D-glyceraldehyde 3-phosphate = dihydroxyacetone phosphate. It participates in carbohydrate biosynthesis; gluconeogenesis. It functions in the pathway carbohydrate degradation; glycolysis; D-glyceraldehyde 3-phosphate from glycerone phosphate: step 1/1. Its function is as follows. Involved in the gluconeogenesis. Catalyzes stereospecifically the conversion of dihydroxyacetone phosphate (DHAP) to D-glyceraldehyde-3-phosphate (G3P). The chain is Triosephosphate isomerase from Cenarchaeum symbiosum (strain A).